A 653-amino-acid polypeptide reads, in one-letter code: Laccase ustL (653 aa).

A signal peptide spans 1-20 (MTSLTGLALLLCVLASQSWA). 2 consecutive Plastocyanin-like domains span residues 31–143 (WEKG…RPKR) and 173–362 (VLSD…ATQV). 8 N-linked (GlcNAc...) asparagine glycosylation sites follow: Asn-74, Asn-220, Asn-235, Asn-255, Asn-277, Asn-405, Asn-463, and Asn-479. The Plastocyanin-like 3 domain maps to 463-594 (NQTVGTEDEK…GGMSIALLDG (132 aa)). Residues His-501, His-504, His-506, His-576, Cys-577, His-578, and His-582 each coordinate Cu cation. N-linked (GlcNAc...) asparagine glycosylation is present at Asn-623.

It belongs to the multicopper oxidase family.

It carries out the reaction 4 norrubrofusarin + O2 = 2 ustilaginoidin A + 2 H2O. Its pathway is secondary metabolite biosynthesis. Functionally, laccase; part of the gene cluster that mediates the biosynthesis of ustilaginoidins, dimeric gamma-naphthopyrones isolated from different fungal species. The first step in the biosynthesis of ustilaginoidins is the production of gamma-naphthopyrone precursor YWA1 by the non-reducing polyketide synthase ustP, via condensation of one acetyl-CoA starter unit with 6 malonyl-CoA units. YWA1 is then probably substrate of the ustZ to yield norrubrofusarin via a dehydration reaction. A key enzyme in the biosynthetic pathway is the laccase ustL, which catalyzes the oxidative dimerization of norrubrofusarin to ustilaginoidin A. It can produce the M- and P-atropisomers in varying amounts, depending on the reaction conditions. For the biosynthesis of 3-methylustilaginoid in derivatives such as chaetochromin A, a methylated derivative of YWA1 is required. The C-methylation is considered to be catalyzed by ustM, the phosphopantetheine attachment site of which indicates that it acts on the growing polyketide chain before release of the product. For the biosynthesis of chaetochromin A, it is assumed that saturation of the D2 double bond takes place before dimerization, and is probably catalyzed by an external reductase because no candidate gene was identified within the cluster. In Ustilaginoidea virens (Rice false smut fungus), this protein is Laccase ustL.